The following is a 1081-amino-acid chain: Inversin (1081 aa).

16 ANK repeats span residues serine 13–aspartate 42, phenylalanine 47–lysine 76, serine 80–lysine 110, glutamate 113–threonine 144, asparagine 148–isoleucine 177, glutamate 181–leucine 213, glutamate 220–serine 250, leucine 254–isoleucine 283, glutamine 288–aspartate 317, glutamate 321–isoleucine 350, tyrosine 356–alanine 385, methionine 389–leucine 418, aspartate 422–valine 451, alanine 455–isoleucine 484, glutamate 488–glutamine 517, and glutamate 523–alanine 553. Asparagine 75 carries the 3-hydroxyasparagine modification. The short motif at arginine 490 to asparagine 498 is the D-box 1 element. The 30-residue stretch at glutamine 555 to lysine 584 folds into the IQ 1 domain. Residues arginine 589 to lysine 610 show a composition bias toward basic and acidic residues. The disordered stretch occupies residues arginine 589–serine 889. Polar residues predominate over residues arginine 638–alanine 649. Composition is skewed to basic and acidic residues over residues lysine 688 to lysine 698, glutamate 724 to lysine 740, and aspartate 772 to serine 785. Residues serine 863 to alanine 872 show a composition bias toward polar residues. The short motif at arginine 910–asparagine 918 is the D-box 2 element. The IQ 2 domain occupies lysine 917 to leucine 946. One copy of the ANK 17 repeat lies at arginine 1022 to phenylalanine 1050. Residues serine 1051–lysine 1061 are compositionally biased toward polar residues. Positions serine 1051–serine 1081 are disordered.

In terms of assembly, binds calmodulin via its IQ domains. Interacts with APC2. Interacts with alpha-, beta-, and gamma-catenin. Interacts with N-cadherin (CDH2). Interacts with NPHP1. Interacts with DVL1, PRICKLE (PRICKLE1 or PRICKLE2) and Strabismus (VANGL1 or VANGL2). Component of a complex containing at least ANKS6, INVS, NEK8 and NPHP3. ANKS6 may organize complex assembly by linking INVS and NPHP3 to NEK8 and INVS may target the complex to the proximal ciliary axoneme. Interacts with IQCB1; the interaction likely requires additional interactors. Interacts with microtubules. In terms of processing, may be ubiquitinated via its interaction with APC2. Post-translationally, hydroxylated at Asn-75, most probably by HIF1AN.

It is found in the cytoplasm. Its subcellular location is the cytoskeleton. The protein localises to the membrane. It localises to the spindle. The protein resides in the nucleus. Functionally, required for normal renal development and establishment of left-right axis. Probably acts as a molecular switch between different Wnt signaling pathways. Inhibits the canonical Wnt pathway by targeting cytoplasmic disheveled (DVL1) for degradation by the ubiquitin-proteasome. This suggests that it is required in renal development to oppose the repression of terminal differentiation of tubular epithelial cells by Wnt signaling. Involved in the organization of apical junctions in kidney cells together with NPHP1, NPHP4 and RPGRIP1L/NPHP8. Does not seem to be strictly required for ciliogenesis. In Canis lupus familiaris (Dog), this protein is Inversin (INVS).